The sequence spans 384 residues: 1-deoxy-D-xylulose 5-phosphate reductoisomerase (384 aa).

NADPH contacts are provided by T10, G11, S12, I13, R37, N38, and N124. K125 provides a ligand contact to 1-deoxy-D-xylulose 5-phosphate. Residue E126 coordinates NADPH. Position 150 (D150) interacts with Mn(2+). 1-deoxy-D-xylulose 5-phosphate contacts are provided by S151, E152, S176, and H199. E152 is a Mn(2+) binding site. G205 contributes to the NADPH binding site. 4 residues coordinate 1-deoxy-D-xylulose 5-phosphate: S212, N217, K218, and E221. Mn(2+) is bound at residue E221.

The protein belongs to the DXR family. It depends on Mg(2+) as a cofactor. Mn(2+) serves as cofactor.

It catalyses the reaction 2-C-methyl-D-erythritol 4-phosphate + NADP(+) = 1-deoxy-D-xylulose 5-phosphate + NADPH + H(+). The protein operates within isoprenoid biosynthesis; isopentenyl diphosphate biosynthesis via DXP pathway; isopentenyl diphosphate from 1-deoxy-D-xylulose 5-phosphate: step 1/6. In terms of biological role, catalyzes the NADPH-dependent rearrangement and reduction of 1-deoxy-D-xylulose-5-phosphate (DXP) to 2-C-methyl-D-erythritol 4-phosphate (MEP). The protein is 1-deoxy-D-xylulose 5-phosphate reductoisomerase of Clostridium perfringens (strain SM101 / Type A).